Here is a 94-residue protein sequence, read N- to C-terminus: Integration host factor subunit beta (94 aa).

Belongs to the bacterial histone-like protein family. Heterodimer of an alpha and a beta chain.

In terms of biological role, this protein is one of the two subunits of integration host factor, a specific DNA-binding protein that functions in genetic recombination as well as in transcriptional and translational control. The polypeptide is Integration host factor subunit beta (Brucella anthropi (strain ATCC 49188 / DSM 6882 / CCUG 24695 / JCM 21032 / LMG 3331 / NBRC 15819 / NCTC 12168 / Alc 37) (Ochrobactrum anthropi)).